Consider the following 100-residue polypeptide: Large ribosomal subunit protein uL23 (100 aa).

The protein belongs to the universal ribosomal protein uL23 family. As to quaternary structure, part of the 50S ribosomal subunit. Contacts protein L29, and trigger factor when it is bound to the ribosome.

Its function is as follows. One of the early assembly proteins it binds 23S rRNA. One of the proteins that surrounds the polypeptide exit tunnel on the outside of the ribosome. Forms the main docking site for trigger factor binding to the ribosome. The polypeptide is Large ribosomal subunit protein uL23 (Baumannia cicadellinicola subsp. Homalodisca coagulata).